The chain runs to 321 residues: uncharacterized protein (321 aa).

Positions 1–80 (MQGGQEVGRE…GELSGGWGEF (80 aa)) are disordered.

This is an uncharacterized protein from Mus musculus (Mouse).